A 62-amino-acid polypeptide reads, in one-letter code: Amolopin-p-MT1 (62 aa).

The signal sequence occupies residues 1–22; the sequence is MFTLKKSLLLLFFLGTISLSLC. Residues 23–42 constitute a propeptide, removed in mature form; that stretch reads EQERGADEEENGGEVTEEEV.

Belongs to the frog skin active peptide (FSAP) family. Brevinin subfamily. Expressed by the skin glands.

The protein resides in the secreted. In terms of biological role, antimicrobial peptide. Active against a variety of Gram-negative and Gram-positive bacterial strains. Not active against fungi. Shows weak hemolytic activity against human erythrocytes. The chain is Amolopin-p-MT1 from Amolops mantzorum (Sichuan torrent frog).